The sequence spans 31 residues: Sarcolipin (31 aa).

The Cytoplasmic segment spans residues 1–7 (MERSTRE). A helical transmembrane segment spans residues 8–26 (LCLNFTVVLITVILIWLLV). Over 27 to 31 (RSYQY) the chain is Lumenal.

It belongs to the sarcolipin family. In terms of assembly, homooligomer. Can also form heterooligomers with other sarcoplasmic/endoplasmic reticulum calcium ATPase (SERCA) regulators ARLN, ERLN, PLN and STRIT1/DWORF. Monomer. Interacts with calcium ATPase ATP2A1/SERCA1. Interacts as a monomer with ATP2A2/SERCA2; the interaction decreases ATP2A2 Ca(2+) affinity. Interacts with VMP1; VMP1 competes with PLN and SLN to prevent them from forming an inhibitory complex with ATP2A2. In terms of tissue distribution, skeletal muscle (at protein level).

It is found in the sarcoplasmic reticulum membrane. Its subcellular location is the endoplasmic reticulum membrane. Functionally, reversibly inhibits the activity of ATP2A1/SERCA1 and ATP2A2/SERCA2 in sarcoplasmic reticulum by decreasing the apparent affinity of the ATPase for Ca(2+). Also inhibits the activity of ATP2A3/SERCA3. Modulates calcium re-uptake during muscle relaxation and plays an important role in calcium homeostasis in muscle. Required for muscle-based, non-shivering thermogenesis. In Oryctolagus cuniculus (Rabbit), this protein is Sarcolipin (SLN).